We begin with the raw amino-acid sequence, 74 residues long: ATP synthase subunit 9, mitochondrial (74 aa).

The next 2 helical transmembrane spans lie at isoleucine 8–phenylalanine 28 and isoleucine 50–isoleucine 70.

This sequence belongs to the ATPase C chain family. F-type ATPases have 2 components, CF(1) - the catalytic core - and CF(0) - the membrane proton channel. CF(1) has five subunits: alpha(3), beta(3), gamma(1), delta(1), epsilon(1). CF(0) has three main subunits: a, b and c.

Its subcellular location is the mitochondrion membrane. Mitochondrial membrane ATP synthase (F(1)F(0) ATP synthase or Complex V) produces ATP from ADP in the presence of a proton gradient across the membrane which is generated by electron transport complexes of the respiratory chain. F-type ATPases consist of two structural domains, F(1) - containing the extramembraneous catalytic core and F(0) - containing the membrane proton channel, linked together by a central stalk and a peripheral stalk. During catalysis, ATP synthesis in the catalytic domain of F(1) is coupled via a rotary mechanism of the central stalk subunits to proton translocation. Part of the complex F(0) domain. A homomeric c-ring of probably 10 subunits is part of the complex rotary element. The protein is ATP synthase subunit 9, mitochondrial (atp9) of Schizosaccharomyces pombe (strain 972 / ATCC 24843) (Fission yeast).